Consider the following 363-residue polypeptide: UDP-N-acetylglucosamine--N-acetylmuramyl-(pentapeptide) pyrophosphoryl-undecaprenol N-acetylglucosamine transferase (363 aa).

Residues 14–16 (TGG), R171, S200, and Q290 each bind UDP-N-acetyl-alpha-D-glucosamine.

Belongs to the glycosyltransferase 28 family. MurG subfamily.

It is found in the cell inner membrane. The catalysed reaction is di-trans,octa-cis-undecaprenyl diphospho-N-acetyl-alpha-D-muramoyl-L-alanyl-D-glutamyl-meso-2,6-diaminopimeloyl-D-alanyl-D-alanine + UDP-N-acetyl-alpha-D-glucosamine = di-trans,octa-cis-undecaprenyl diphospho-[N-acetyl-alpha-D-glucosaminyl-(1-&gt;4)]-N-acetyl-alpha-D-muramoyl-L-alanyl-D-glutamyl-meso-2,6-diaminopimeloyl-D-alanyl-D-alanine + UDP + H(+). It functions in the pathway cell wall biogenesis; peptidoglycan biosynthesis. In terms of biological role, cell wall formation. Catalyzes the transfer of a GlcNAc subunit on undecaprenyl-pyrophosphoryl-MurNAc-pentapeptide (lipid intermediate I) to form undecaprenyl-pyrophosphoryl-MurNAc-(pentapeptide)GlcNAc (lipid intermediate II). In Borreliella afzelii (strain PKo) (Borrelia afzelii), this protein is UDP-N-acetylglucosamine--N-acetylmuramyl-(pentapeptide) pyrophosphoryl-undecaprenol N-acetylglucosamine transferase.